The following is a 185-amino-acid chain: Probable chorismate pyruvate-lyase 1 (185 aa).

Substrate contacts are provided by R70, L108, and E166.

The protein belongs to the UbiC family.

The protein resides in the cytoplasm. It carries out the reaction chorismate = 4-hydroxybenzoate + pyruvate. It participates in cofactor biosynthesis; ubiquinone biosynthesis. Its function is as follows. Removes the pyruvyl group from chorismate, with concomitant aromatization of the ring, to provide 4-hydroxybenzoate (4HB) for the ubiquinone pathway. The chain is Probable chorismate pyruvate-lyase 1 from Pseudomonas fluorescens (strain Pf0-1).